The sequence spans 512 residues: GMP synthase [glutamine-hydrolyzing] (512 aa).

The 190-residue stretch at Lys-6–Lys-195 folds into the Glutamine amidotransferase type-1 domain. Cys-83 serves as the catalytic Nucleophile. Residues His-169 and Glu-171 contribute to the active site. Positions Trp-196–Lys-387 constitute a GMPS ATP-PPase domain. Ser-223 to Ser-229 contributes to the ATP binding site.

Homodimer.

The enzyme catalyses XMP + L-glutamine + ATP + H2O = GMP + L-glutamate + AMP + diphosphate + 2 H(+). It functions in the pathway purine metabolism; GMP biosynthesis; GMP from XMP (L-Gln route): step 1/1. Catalyzes the synthesis of GMP from XMP. The sequence is that of GMP synthase [glutamine-hydrolyzing] from Spiroplasma kunkelii.